A 289-amino-acid polypeptide reads, in one-letter code: Probable early E4 33 kDa protein (289 aa).

This sequence belongs to the adenoviridae E4 30 to 34 kDa protein family. In terms of assembly, interacts with E1B-55k.

The protein localises to the host nucleus. Its subcellular location is the host cytoplasm. Its function is as follows. Plays a major role to prevent cellular inhibition of viral genome replication by nuclear bodies. Assembles an SCF-like E3 ubiquitin ligase complex based on the cellular proteins ELOB, ELOC, CUL5 and RBX1, in cooperation with viral E1B-55K. This viral RING-type ligase ubiquitinates cellular substrates prior to proteasomal degradation: p53/TP53, LIG4, MRE11-RAD50-NBS1 (MRN) complex, ITGA3, DAXX and BLM. The protein is Probable early E4 33 kDa protein of Mus musculus (Mouse).